A 1465-amino-acid polypeptide reads, in one-letter code: DNA polymerase III PolC-type (1465 aa).

Residues 427-583 (YVVFDVETTG…YDAEATGRLL (157 aa)) form the Exonuclease domain.

Belongs to the DNA polymerase type-C family. PolC subfamily.

The protein resides in the cytoplasm. The catalysed reaction is DNA(n) + a 2'-deoxyribonucleoside 5'-triphosphate = DNA(n+1) + diphosphate. Its function is as follows. Required for replicative DNA synthesis. This DNA polymerase also exhibits 3' to 5' exonuclease activity. This is DNA polymerase III PolC-type from Streptococcus pyogenes serotype M6 (strain ATCC BAA-946 / MGAS10394).